Consider the following 152-residue polypeptide: Large ribosomal subunit protein uL22 (152 aa).

A compositionally biased stretch (low complexity) spans 124–145 (APKKAAAKKAAPAKETTPAATE). Residues 124–152 (APKKAAAKKAAPAKETTPAATESKTEGAE) are disordered.

It belongs to the universal ribosomal protein uL22 family. Part of the 50S ribosomal subunit.

This protein binds specifically to 23S rRNA; its binding is stimulated by other ribosomal proteins, e.g. L4, L17, and L20. It is important during the early stages of 50S assembly. It makes multiple contacts with different domains of the 23S rRNA in the assembled 50S subunit and ribosome. Its function is as follows. The globular domain of the protein is located near the polypeptide exit tunnel on the outside of the subunit, while an extended beta-hairpin is found that lines the wall of the exit tunnel in the center of the 70S ribosome. This is Large ribosomal subunit protein uL22 from Salinispora tropica (strain ATCC BAA-916 / DSM 44818 / JCM 13857 / NBRC 105044 / CNB-440).